A 167-amino-acid polypeptide reads, in one-letter code: SsrA-binding protein (167 aa).

Residues 139–158 show a composition bias toward basic and acidic residues; the sequence is QNHDKRDAAKERDWQRDKQR. Residues 139–167 are disordered; it reads QNHDKRDAAKERDWQRDKQRVMRRHNRDA.

Belongs to the SmpB family.

Its subcellular location is the cytoplasm. In terms of biological role, required for rescue of stalled ribosomes mediated by trans-translation. Binds to transfer-messenger RNA (tmRNA), required for stable association of tmRNA with ribosomes. tmRNA and SmpB together mimic tRNA shape, replacing the anticodon stem-loop with SmpB. tmRNA is encoded by the ssrA gene; the 2 termini fold to resemble tRNA(Ala) and it encodes a 'tag peptide', a short internal open reading frame. During trans-translation Ala-aminoacylated tmRNA acts like a tRNA, entering the A-site of stalled ribosomes, displacing the stalled mRNA. The ribosome then switches to translate the ORF on the tmRNA; the nascent peptide is terminated with the 'tag peptide' encoded by the tmRNA and targeted for degradation. The ribosome is freed to recommence translation, which seems to be the essential function of trans-translation. The sequence is that of SsrA-binding protein from Xanthomonas oryzae pv. oryzae (strain MAFF 311018).